Here is a 237-residue protein sequence, read N- to C-terminus: UPF0280 protein Mpal_1292 (237 aa).

Belongs to the UPF0280 family.

The sequence is that of UPF0280 protein Mpal_1292 from Methanosphaerula palustris (strain ATCC BAA-1556 / DSM 19958 / E1-9c).